The following is a 271-amino-acid chain: ATP synthase subunit a (271 aa).

Transmembrane regions (helical) follow at residues 40-60, 100-120, 146-166, 220-240, and 242-262; these read TINI…LVLF, LIAP…LMDL, DVNV…FYSI, LIFI…LNVP, and AIFH…LTIV.

It belongs to the ATPase A chain family. F-type ATPases have 2 components, CF(1) - the catalytic core - and CF(0) - the membrane proton channel. CF(1) has five subunits: alpha(3), beta(3), gamma(1), delta(1), epsilon(1). CF(0) has three main subunits: a(1), b(2) and c(9-12). The alpha and beta chains form an alternating ring which encloses part of the gamma chain. CF(1) is attached to CF(0) by a central stalk formed by the gamma and epsilon chains, while a peripheral stalk is formed by the delta and b chains.

The protein localises to the cell inner membrane. Functionally, key component of the proton channel; it plays a direct role in the translocation of protons across the membrane. This chain is ATP synthase subunit a, found in Escherichia coli O8 (strain IAI1).